A 1026-amino-acid chain; its full sequence is Retinoblastoma-related protein 1 (1026 aa).

Residues T416–L616 are domain A. A pocket region spans residues T416–P872. The spacer stretch occupies residues A617 to E737. Residues P656 to C680 are disordered. The segment at T738 to P872 is domain B. The disordered stretch occupies residues Q1007–S1026.

This sequence belongs to the retinoblastoma protein (RB) family.

It is found in the nucleus. Regulator of biological processes that recruits a histone deacetylase to control gene transcription. May play a role in the entry into mitosis, negatively regulating the cell proliferation. Formation of stable complexes with geminiviridae replication-associated proteins may create a cellular environment which favors viral DNA replication. The protein is Retinoblastoma-related protein 1 (RBR1) of Pisum sativum (Garden pea).